We begin with the raw amino-acid sequence, 496 residues long: MSFILALDQGTTSSRALVFDHDGTVRGLAQKEFRQIFPEPGLVEHDAEEIWASQLGVAVEAVARAGLSAADIAAIGITNQRETTVVWDRRTGKPIHNAIVWQDRRTAAECDRLKRLGLEATFRARTGLVLDPYFSGTKLAWLLDHLPGARDKAERGELAFGTIDSWLVWNLTGGERHLTDASNASRTLLFNIHEGNWDQELLQLLRIPPAILPEVVPSSQVYGETAARFFAARVPISGIAGDQQAALFGQLCDRPGMVKNTYGTGCFMLMQTGERPVLSERNLLTTVACRLGERTEYALEGSVFAAGAAVQWLRDGLGIIRSSEEVETLAATVPDNGGVYLVPAFAGLGAPHWDPYARGTLLGITRGSTAGHIARATLESIAFQTADLLEAMEADAATPLTELRVDGGATANNLLMQFQADLLGVPVVRPRVRETTALGAAYLAGLAIGYWQDRKELSRLWQAEQAFAPVLERERMAELRYNWNRAVERSKGWAQP.

An ADP-binding site is contributed by T11. 3 residues coordinate ATP: T11, T12, and S13. T11 lines the sn-glycerol 3-phosphate pocket. Residue R15 participates in ADP binding. Residues R81, E82, Y133, and D242 each contribute to the sn-glycerol 3-phosphate site. Residues R81, E82, Y133, D242, and Q243 each contribute to the glycerol site. ADP contacts are provided by T264 and G307. Positions 264, 307, 311, and 408 each coordinate ATP. ADP is bound by residues G408 and N412.

Belongs to the FGGY kinase family.

The catalysed reaction is glycerol + ATP = sn-glycerol 3-phosphate + ADP + H(+). It participates in polyol metabolism; glycerol degradation via glycerol kinase pathway; sn-glycerol 3-phosphate from glycerol: step 1/1. With respect to regulation, inhibited by fructose 1,6-bisphosphate (FBP). In terms of biological role, key enzyme in the regulation of glycerol uptake and metabolism. Catalyzes the phosphorylation of glycerol to yield sn-glycerol 3-phosphate. The chain is Glycerol kinase from Trichlorobacter lovleyi (strain ATCC BAA-1151 / DSM 17278 / SZ) (Geobacter lovleyi).